The sequence spans 102 residues: MAKQKIRIRLKAFDHTILDQSAEKIVETAKTTGAKVAGPVPLPTEKDVVTILRSPHKYKDSREQFEIRTHKRLIDIISPSPKTVDALMRLDLPAGVDIEIKL.

The protein belongs to the universal ribosomal protein uS10 family. In terms of assembly, part of the 30S ribosomal subunit.

In terms of biological role, involved in the binding of tRNA to the ribosomes. In Clostridium acetobutylicum (strain ATCC 824 / DSM 792 / JCM 1419 / IAM 19013 / LMG 5710 / NBRC 13948 / NRRL B-527 / VKM B-1787 / 2291 / W), this protein is Small ribosomal subunit protein uS10.